A 200-amino-acid polypeptide reads, in one-letter code: Rho GDP-dissociation inhibitor 2 (200 aa).

The disordered stretch occupies residues 1–39 (MTEKDAQPQLEEADDDLDSKLNYKPPPQKSLKELQEMDK). Threonine 2 is subject to N-acetylthreonine. At lysine 20 the chain carries N6-acetyllysine. At tyrosine 23 the chain carries Phosphotyrosine. 5 positions are modified to N6-acetyllysine: lysine 24, lysine 39, lysine 46, lysine 101, and lysine 123. The span at 30 to 39 (SLKELQEMDK) shows a compositional bias: basic and acidic residues. At serine 144 the chain carries Phosphoserine. Lysine 174 is modified (N6-acetyllysine).

The protein belongs to the Rho GDI family. Interacts with RHOA. Interacts with RAC1. Interacts with RAC2. Interacts with CDC42. As to expression, preferentially expressed in hematopoietic cells.

The protein localises to the cytoplasm. It is found in the cytosol. In terms of biological role, regulates the GDP/GTP exchange reaction of the Rho proteins by inhibiting the dissociation of GDP from them, and the subsequent binding of GTP to them. Regulates reorganization of the actin cytoskeleton mediated by Rho family members. This chain is Rho GDP-dissociation inhibitor 2 (Arhgdib), found in Mus musculus (Mouse).